The chain runs to 1034 residues: Probable outer membrane protein PmpF (1034 aa).

The N-terminal stretch at 1–25 (MIKRTSLSFACLSFFYLSTISILQA) is a signal peptide. Low complexity-rich tracts occupy residues 664-673 (SAPTSATSIA) and 680-709 (ETFT…ASNS). The disordered stretch occupies residues 664-709 (SAPTSATSIAEQKKTSETFTPSNTTTASIPNIKASAGSGSGSASNS). The 280-residue stretch at 755–1034 (RSLLPDNSWF…YINAGGALVF (280 aa)) folds into the Autotransporter domain.

It belongs to the PMP outer membrane protein family.

It localises to the secreted. It is found in the cell wall. The protein resides in the cell outer membrane. In Chlamydia trachomatis serovar D (strain ATCC VR-885 / DSM 19411 / UW-3/Cx), this protein is Probable outer membrane protein PmpF (pmpF).